We begin with the raw amino-acid sequence, 165 residues long: MAVKIKLQRLGKIRTPHYRVVIADARTKRDGKVIENIGIYEPKAEPSVIKINSERAQHWLSVGAQPTEAVAALLKVTGDWQKFKGIEGAEGTLRVAEPKPSKLELFNQALSEANNGPTAEAITEKKKKAREDKEAKEAAEKAAAEKAAAAESEEAPAEEAAAEEA.

A disordered region spans residues 110 to 165 (LSEANNGPTAEAITEKKKKAREDKEAKEAAEKAAAEKAAAAESEEAPAEEAAAEEA). Over residues 129–144 (AREDKEAKEAAEKAAA) the composition is skewed to basic and acidic residues. Over residues 151-165 (ESEEAPAEEAAAEEA) the composition is skewed to acidic residues.

It belongs to the bacterial ribosomal protein bS16 family.

This is Small ribosomal subunit protein bS16 from Corynebacterium glutamicum (strain R).